A 195-amino-acid polypeptide reads, in one-letter code: Interferon tau-9 (195 aa).

The first 23 residues, 1-23 (MAFVLSLLMALVLVSYGPGGSLG), serve as a signal peptide directing secretion. 2 cysteine pairs are disulfide-bonded: Cys24/Cys122 and Cys52/Cys162.

This sequence belongs to the alpha/beta interferon family. IFN-alphaII subfamily. Constitutively and exclusively expressed in the mononuclear cells of the extraembryonic trophectoderm.

The protein localises to the secreted. Paracrine hormone primarily responsible for maternal recognition of pregnancy. Interacts with endometrial receptors, probably type I interferon receptors, and blocks estrogen receptor expression, preventing the estrogen-induced increase in oxytocin receptor expression in the endometrium. This results in the suppression of the pulsatile endometrial release of the luteolytic hormone prostaglandin F2-alpha, hindering the regression of the corpus luteum (luteolysis) and therefore a return to ovarian cyclicity. This, and a possible direct effect of IFN-tau on prostaglandin synthesis, leads in turn to continued ovarian progesterone secretion, which stimulates the secretion by the endometrium of the nutrients required for the growth of the conceptus. In summary, displays particularly high antiviral and antiproliferative potency concurrently with particular weak cytotoxicity, high antiluteolytic activity and immunomodulatory properties. In contrast with other IFNs, IFN-tau is not virally inducible. The protein is Interferon tau-9 (IFNT9) of Ovis aries (Sheep).